A 462-amino-acid chain; its full sequence is MGKEKIHINIVVIGHVDSGKSTTTGHLIYKCGGIDKRTIEKFEKEAQEMGKGSFKYAWVLDKLKAERERGITIDIALWKFETAKYYVTIIDAPGHRDFIKNMITGTSQADCAVLIVAAGVGEFEAGISKNGQTREHALLAYTLGVKQLIVGVNKMDSTEPPFSEARFEEIKKEVSAYIKKIGYNPAAVAFVPISGWHGDNMLEASDRLPWYKGWNIERKEGKADGKTLLDALDAILPPSRPTEKPLRLPLQDVYKIGGIGTVPVGRVETGIIKPGMIVTFAPANITTEVKSVEMHHESLEQASPGDNVGFNVKNVSVKELRRGYVASDSKNNPARGSQDFFAQVIVLNHPGQISNGYTPVLDCHTAHIACKFAEIKEKCDRRTGKTTEAEPKFIKSGDAAMITLVPSKPLCVEAFSDFPPLGRFAVRDMRQTVAVGVIKSVNFKDPTAGKVTKAAEKAGKKK.

G2 bears the Blocked amino end (Gly) mark. One can recognise a tr-type G domain in the interval 5–242 (KIHINIVVIG…DAILPPSRPT (238 aa)). The interval 14-21 (GHVDSGKS) is G1. A GTP-binding site is contributed by 14–21 (GHVDSGKS). The residue at position 36 (K36) is an N6,N6,N6-trimethyllysine. K55 is modified (N6-methyllysine). The tract at residues 70–74 (GITID) is G2. K79 carries the N6,N6,N6-trimethyllysine modification. The G3 stretch occupies residues 91-94 (DAPG). GTP contacts are provided by residues 91-95 (DAPGH) and 153-156 (NKMD). The tract at residues 153-156 (NKMD) is G4. Residues 194 to 196 (SGW) form a G5 region. K219 and K318 each carry N6,N6,N6-trimethyllysine. 5-glutamyl glycerylphosphorylethanolamine is present on E374.

The protein belongs to the TRAFAC class translation factor GTPase superfamily. Classic translation factor GTPase family. EF-Tu/EF-1A subfamily. Post-translationally, the N-terminus is blocked.

The protein resides in the cytoplasm. This protein promotes the GTP-dependent binding of aminoacyl-tRNA to the A-site of ribosomes during protein biosynthesis. In Artemia salina (Brine shrimp), this protein is Elongation factor 1-alpha.